A 1507-amino-acid polypeptide reads, in one-letter code: Transient receptor potential cation channel subfamily M member 2 (1507 aa).

Basic and acidic residues predominate over residues 1-11; sequence MEPLDQRRTDS. Residues 1 to 24 form a disordered region; that stretch reads MEPLDQRRTDSDQEEGFGVQSRRA. Residues 1–751 lie on the Cytoplasmic side of the membrane; sequence MEPLDQRRTD…WWGQLCVDNG (751 aa). ADP-D-ribose-binding residues include Thr173, Asn178, Arg301, Gly332, and Thr335. Thr739 carries the post-translational modification Phosphothreonine. Residues 752-768 lie within the membrane without spanning it; the sequence is LWRIILCMLAFPLLFTG. Over 769–793 the chain is Cytoplasmic; it reads FISFREKRLQALCRLARVRAFFNAP. A helical transmembrane segment spans residues 794–814; the sequence is VVIFYLNILSYFAFLCLFAYV. Over 815–825 the chain is Extracellular; sequence LMVDFQPSPSW. The helical transmembrane segment at 826–846 threads the bilayer; the sequence is CEYLIYLWLFSLVCEETRQLF. Glu841 and Gln844 together coordinate Ca(2+). Over 847–865 the chain is Cytoplasmic; the sequence is YDPDGCGLMKMASLYFSDF. A helical membrane pass occupies residues 866–886; that stretch reads WNKLDVGAILLFIAGLTCRLI. Asn867 provides a ligand contact to Ca(2+). The Extracellular segment spans residues 887–894; sequence PATLYPGR. A helical membrane pass occupies residues 895-915; the sequence is IILSLDFIMFCLRLMHIFTIS. Residues 916 to 927 are Cytoplasmic-facing; the sequence is KTLGPKIIIVKR. A helical membrane pass occupies residues 928–948; sequence MMKDVFFFLFLLAVWVVSFGV. Over 949–968 the chain is Extracellular; it reads AKQAILIHNESRVDWIFRGV. Positions 969 to 983 form an intramembrane region, pore-forming; it reads IYHSYLTIFGQIPTY. The short motif at 977–980 is the Selectivity filter element; sequence FGQI. The Extracellular portion of the chain corresponds to 984-1020; the sequence is IDGVNFSMDQCSPNGTDPYKPKCPESDWTGQAPAFPE. Cysteines 994 and 1006 form a disulfide. The helical transmembrane segment at 1021–1042 threads the bilayer; that stretch reads WLTVTLLCLYLLFANILLLNLL. Topologically, residues 1043-1077 are cytoplasmic; sequence IAMFNYTFQEVQEHTDQIWKFQRHDLIEEYHGRPP. A Ca(2+)-binding site is contributed by Glu1071. The stretch at 1078–1096 is an intramembrane region; sequence APPPLILLSHLQLLIKRIV. Residues 1097 to 1507 are Cytoplasmic-facing; sequence LKIPAKRHKQ…KVASLFGAHF (411 aa). The Nudix hydrolase domain occupies 1351 to 1502; sequence RWKRNQGGGI…KKILQKVASL (152 aa). Ser1379 contributes to the ADP-D-ribose binding site. A Nudix box motif is present at residues 1387 to 1408; sequence GSREPGKMLPRKLKQVLQQEYW. 4 residues coordinate ADP-D-ribose: Asp1428, Arg1430, Tyr1489, and Asn1491.

It belongs to the transient receptor (TC 1.A.4) family. LTrpC subfamily. TRPM2 sub-subfamily. As to quaternary structure, homotetramer. In terms of processing, phosphorylation of TRPM2 at Thr-739 by protein kinase C (PKC) counteracts the effect of cytosolic Ca(2+) and elevates the temperature threshold. As to expression, detected in pancreas beta-cells. Detected in fetal brain cortex neurons (at protein level).

It is found in the cell membrane. The protein resides in the perikaryon. It localises to the cell projection. Its subcellular location is the cytoplasmic vesicle. The protein localises to the lysosome. The catalysed reaction is Ca(2+)(in) = Ca(2+)(out). The enzyme catalyses Na(+)(in) = Na(+)(out). With respect to regulation, activated by intracellular ADP-ribose, beta-NAD (NAD(+)) and similar compounds, and by oxidative stress caused by reactive oxygen or nitrogen species. Ca(2+) and PI(4,5)P2 are required for channel opening by ADP-ribose. Activation by ADP-ribose and beta-NAD is strongly increased by moderate heat (35 to 40 degrees Celsius). Likewise, reactive oxygen species lower the threshold for activation by moderate heat (37 degrees Celsius). Activated by moderate heat (35 to 40 degrees Celsius). Inactivated by exposure to extracellular pH between 4.0 and 6.5; irreversibly inactivated when open channels are exposed to extracellular pH between 4.0 and 6.5, while pre-exposure of closed channels to extracellular pH 5.5 gives rise to currents that rapidly inactivate, but protects against irreversible inactivation. Inactivated by intracellular ATP. Activated by arachidonic acid. Inhibited by 2-aminoethyl diphenylborinate (2-APB). Its function is as follows. Nonselective, voltage-independent cation channel that mediates Na(+) and Ca(2+) influx, leading to increased cytoplasmic Ca(2+) levels. Functions as a ligand-gated ion channel gated by intracellular adenosine diphosphate ribose (ADP-ribose), Ca(2+), warm temperature, and oxidative stress. The precise physiological activators are under debate; the true, physiological activators may be ADP-ribose and ADP-ribose-2'-phosphate. Binding of ADP-ribose to the cytoplasmic Nudix domain causes a conformation change; the channel is primed but still requires Ca(2+) binding to trigger channel opening. Extracellular Ca(2+) passes through the channel and increases channel activity. Also contributes to Ca(2+) release from intracellular stores in response to ADP-ribose. Plays a role in numerous processes that involve signaling via intracellular Ca(2+) levels. Besides, mediates the release of lysosomal Zn(2+) stores in response to reactive oxygen species, leading to increased cytosolic Zn(2+) levels. Plays a role in insulin secretion, a process that requires increased cytoplasmic Ca(2+) levels. Required for normal IFNG and cytokine secretion and normal innate immune immunity in response to bacterial infection. Required for normal phagocytosis and cytokine release by macrophages exposed to zymosan (in vitro). Plays a role in dendritic cell differentiation and maturation, and in dendritic cell chemotaxis via its role in regulating cytoplasmic Ca(2+) levels. Plays a role in the regulation of the reorganization of the actin cytoskeleton and filopodia formation in response to reactive oxygen species via its function in increasing cytoplasmic Ca(2+) and Zn(2+) levels. Confers susceptibility to cell death following oxidative stress. This Rattus norvegicus (Rat) protein is Transient receptor potential cation channel subfamily M member 2.